The chain runs to 575 residues: DNA-directed RNA polymerase subunit beta' (575 aa).

Positions 64, 66, 85, and 88 each coordinate Zn(2+). Residues aspartate 440, aspartate 442, and aspartate 444 each coordinate Mg(2+).

Belongs to the RNA polymerase beta' chain family. RpoC1 subfamily. In plastids the minimal PEP RNA polymerase catalytic core is composed of four subunits: alpha, beta, beta', and beta''. When a (nuclear-encoded) sigma factor is associated with the core the holoenzyme is formed, which can initiate transcription. Mg(2+) is required as a cofactor. The cofactor is Zn(2+).

It localises to the plastid. The catalysed reaction is RNA(n) + a ribonucleoside 5'-triphosphate = RNA(n+1) + diphosphate. DNA-dependent RNA polymerase catalyzes the transcription of DNA into RNA using the four ribonucleoside triphosphates as substrates. This chain is DNA-directed RNA polymerase subunit beta', found in Euglena longa (Euglenophycean alga).